Consider the following 122-residue polypeptide: Large ribosomal subunit protein uL14 (122 aa).

Belongs to the universal ribosomal protein uL14 family. In terms of assembly, part of the 50S ribosomal subunit. Forms a cluster with proteins L3 and L19. In the 70S ribosome, L14 and L19 interact and together make contacts with the 16S rRNA in bridges B5 and B8.

Its function is as follows. Binds to 23S rRNA. Forms part of two intersubunit bridges in the 70S ribosome. This chain is Large ribosomal subunit protein uL14, found in Finegoldia magna (strain ATCC 29328 / DSM 20472 / WAL 2508) (Peptostreptococcus magnus).